Here is a 467-residue protein sequence, read N- to C-terminus: Chromosomal replication initiator protein DnaA (467 aa).

Residues 1–84 form a domain I, interacts with DnaA modulators region; the sequence is MDISLDQLWD…LQVEFSVSPH (84 aa). The tract at residues 84-125 is domain II; that stretch reads HASVEAEPPSRAISPTSGRAGSLPASTTLGLEVGGSLPMRAP. Positions 89 to 108 are disordered; sequence AEPPSRAISPTSGRAGSLPA. Residues 96-108 show a composition bias toward polar residues; it reads ISPTSGRAGSLPA. The tract at residues 126-342 is domain III, AAA+ region; it reads DLNPKYSFSR…GALIRAVAYV (217 aa). The ATP site is built by Gly170, Gly172, Lys173, and Thr174. The interval 343-467 is domain IV, binds dsDNA; it reads SISGLPMSVE…LRVVANSRSS (125 aa).

The protein belongs to the DnaA family. Oligomerizes as a right-handed, spiral filament on DNA at oriC.

Its subcellular location is the cytoplasm. In terms of biological role, plays an essential role in the initiation and regulation of chromosomal replication. ATP-DnaA binds to the origin of replication (oriC) to initiate formation of the DNA replication initiation complex once per cell cycle. Binds the DnaA box (a 9 base pair repeat at the origin) and separates the double-stranded (ds)DNA. Forms a right-handed helical filament on oriC DNA; dsDNA binds to the exterior of the filament while single-stranded (ss)DNA is stabiized in the filament's interior. The ATP-DnaA-oriC complex binds and stabilizes one strand of the AT-rich DNA unwinding element (DUE), permitting loading of DNA polymerase. After initiation quickly degrades to an ADP-DnaA complex that is not apt for DNA replication. Binds acidic phospholipids. This is Chromosomal replication initiator protein DnaA from Synechococcus sp. (strain JA-2-3B'a(2-13)) (Cyanobacteria bacterium Yellowstone B-Prime).